The following is a 156-amino-acid chain: Small ribosomal subunit protein uS7c (156 aa).

This sequence belongs to the universal ribosomal protein uS7 family. As to quaternary structure, part of the 30S ribosomal subunit.

The protein resides in the plastid. Its subcellular location is the chloroplast. Functionally, one of the primary rRNA binding proteins, it binds directly to 16S rRNA where it nucleates assembly of the head domain of the 30S subunit. The sequence is that of Small ribosomal subunit protein uS7c (rps7) from Pisum sativum (Garden pea).